A 202-amino-acid polypeptide reads, in one-letter code: FMN-dependent NADH:quinone oxidoreductase (202 aa).

FMN is bound by residues Ser10, 16-18 (SAS), and 96-99 (MWNF).

Belongs to the azoreductase type 1 family. As to quaternary structure, homodimer. Requires FMN as cofactor.

It catalyses the reaction 2 a quinone + NADH + H(+) = 2 a 1,4-benzosemiquinone + NAD(+). The enzyme catalyses N,N-dimethyl-1,4-phenylenediamine + anthranilate + 2 NAD(+) = 2-(4-dimethylaminophenyl)diazenylbenzoate + 2 NADH + 2 H(+). Its function is as follows. Quinone reductase that provides resistance to thiol-specific stress caused by electrophilic quinones. In terms of biological role, also exhibits azoreductase activity. Catalyzes the reductive cleavage of the azo bond in aromatic azo compounds to the corresponding amines. The polypeptide is FMN-dependent NADH:quinone oxidoreductase (Beijerinckia indica subsp. indica (strain ATCC 9039 / DSM 1715 / NCIMB 8712)).